Consider the following 1002-residue polypeptide: UPF0182 protein alr1037 (1002 aa).

9 consecutive transmembrane segments (helical) span residues 7–29, 49–71, 123–145, 178–200, 202–224, 258–280, 300–319, 339–361, and 382–404; these read FRLS…LGAE, RGVL…LALA, LRWL…VHYG, QVFS…LIYS, FFLR…YNWA, LLEL…TYLL, HLYG…YWLS, VVVQ…FYLL, and GAYL…YLIV.

The protein belongs to the UPF0182 family.

The protein localises to the cell membrane. In Nostoc sp. (strain PCC 7120 / SAG 25.82 / UTEX 2576), this protein is UPF0182 protein alr1037.